The chain runs to 311 residues: DNA-directed RNA polymerase subunit alpha (311 aa).

Positions 1–227 are alpha N-terminal domain (alpha-NTD); sequence MNNISIKCLK…DLFTLLINNK (227 aa). Positions 242–311 are alpha C-terminal domain (alpha-CTD); it reads ISIEPYTNIA…LKNKLGIILK (70 aa).

The protein belongs to the RNA polymerase alpha chain family. As to quaternary structure, in plastids the minimal PEP RNA polymerase catalytic core is composed of four subunits: alpha, beta, beta', and beta''. When a (nuclear-encoded) sigma factor is associated with the core the holoenzyme is formed, which can initiate transcription.

The protein localises to the plastid. The protein resides in the chloroplast. It catalyses the reaction RNA(n) + a ribonucleoside 5'-triphosphate = RNA(n+1) + diphosphate. Its function is as follows. DNA-dependent RNA polymerase catalyzes the transcription of DNA into RNA using the four ribonucleoside triphosphates as substrates. The protein is DNA-directed RNA polymerase subunit alpha of Phaeodactylum tricornutum (strain CCAP 1055/1).